A 734-amino-acid chain; its full sequence is Photosystem I P700 chlorophyll a apoprotein A2 (734 aa).

Helical transmembrane passes span 46–69, 135–158, 175–199, 273–291, 330–353, 369–395, 417–439, and 517–535; these read IFAS…FHVA, LYTG…LHLQ, LNHH…HVAI, VAHH…GLMY, IHFQ…QHMY, AALY…IFFI, AIIS…LYVH, and FLVH…LILV. Positions 559 and 568 each coordinate [4Fe-4S] cluster. 2 consecutive transmembrane segments (helical) span residues 575-596 and 643-665; these read DFYL…YWHW and LSVW…MFLI. Chlorophyll a is bound by residues His-654, Met-662, and Tyr-670. A phylloquinone-binding site is contributed by Trp-671. The helical transmembrane segment at 707-727 threads the bilayer; that stretch reads LVGLVHFSVGYIFTYAAFLIA.

Belongs to the PsaA/PsaB family. The PsaA/B heterodimer binds the P700 chlorophyll special pair and subsequent electron acceptors. PSI consists of a core antenna complex that captures photons, and an electron transfer chain that converts photonic excitation into a charge separation. The eukaryotic PSI reaction center is composed of at least 11 subunits. It depends on P700 is a chlorophyll a/chlorophyll a' dimer, A0 is one or more chlorophyll a, A1 is one or both phylloquinones and FX is a shared 4Fe-4S iron-sulfur center. as a cofactor.

The protein localises to the plastid. It is found in the chloroplast thylakoid membrane. The enzyme catalyses reduced [plastocyanin] + hnu + oxidized [2Fe-2S]-[ferredoxin] = oxidized [plastocyanin] + reduced [2Fe-2S]-[ferredoxin]. PsaA and PsaB bind P700, the primary electron donor of photosystem I (PSI), as well as the electron acceptors A0, A1 and FX. PSI is a plastocyanin-ferredoxin oxidoreductase, converting photonic excitation into a charge separation, which transfers an electron from the donor P700 chlorophyll pair to the spectroscopically characterized acceptors A0, A1, FX, FA and FB in turn. Oxidized P700 is reduced on the lumenal side of the thylakoid membrane by plastocyanin. This chain is Photosystem I P700 chlorophyll a apoprotein A2, found in Pisum sativum (Garden pea).